Consider the following 238-residue polypeptide: Accessory gene regulator A (238 aa).

The Response regulatory domain occupies 2-125 (KIFICEDDPK…LRTRIIDCLE (124 aa)). The residue at position 59 (aspartate 59) is a 4-aspartylphosphate. The 96-residue stretch at 143-238 (IELKRGSNSV…YASVRNVKKI (96 aa)) folds into the HTH LytTR-type domain.

Its subcellular location is the cytoplasm. In terms of biological role, required for high-level post-exponential phase expression of a series of secreted proteins. The polypeptide is Accessory gene regulator A (agrA) (Staphylococcus aureus (strain COL)).